A 509-amino-acid chain; its full sequence is Cytochrome P450 monooxygenase AFT11-1 (509 aa).

Residue Cys-432 participates in heme binding.

The protein belongs to the cytochrome P450 family. Heme serves as cofactor.

It participates in mycotoxin biosynthesis. Cytochrome P450 monooxygenase; part of the gene clusters that mediate the biosynthesis of the host-selective toxins (HSTs) AF-toxins responsible for Alternaria black spot of strawberry disease by the strawberry pathotype. AF-toxin I and III are valine derivatives of 2,3-dyhydroxy-isovaleric acid and 2-hydroxy-isovaleric acid respectively, while AF II is an isoleucine derivative of 2-hydroxy-valeric acid. These derivatives are bound to a 9,10-epoxy-8-hydroxy-9-methyl-decatrienoic acid (EDA) moiety. On cellular level, AF-toxins affect plasma membrane of susceptible cells and cause a sudden increase in loss of K(+) after a few minutes of toxin treatment. The aldo-keto reductase AFTS1 catalyzes the conversion of 2-keto-isovaleric acid (2-KIV) to 2-hydroxy-isovaleric acid (2-HIV) by reduction of its ketone to an alcohol. The acyl-CoA ligase AFT1, the hydrolase AFT2 and the enoyl-CoA hydratases AFT3 and AFT6, but also the polyketide synthase AFT9, the acyl-CoA dehydrogenase AFT10, the cytochrome P450 monooxygenase AFT11 and the oxidoreductase AFT12 are all involved in the biosynthesis of the AK-, AF- and ACT-toxin common EDA structural moiety. The exact function of each enzyme, and of additional enzymes identified within the AF-toxin clusters have still to be determined. This chain is Cytochrome P450 monooxygenase AFT11-1, found in Alternaria alternata (Alternaria rot fungus).